A 157-amino-acid polypeptide reads, in one-letter code: Transcription factor HES-2 (157 aa).

In terms of domain architecture, bHLH spans 13–70 (LRKSLKPLLEKRRRARINESLSQLKGLVLPLLGAETSRYSKLEKADILEMTVRFLREQ). The 34-residue stretch at 86-119 (YLEGYRACLARLARVLPACSVLEPAVSARLLEHL) folds into the Orange domain. Positions 124-157 (VSGGPPSLTPASASAPAPSPPVPPPSSLGLWRPW) are disordered. Residues 125-139 (SGGPPSLTPASASAP) show a composition bias toward low complexity. The segment covering 140 to 149 (APSPPVPPPS) has biased composition (pro residues). Positions 154–157 (WRPW) match the WRPW motif motif.

In terms of assembly, transcription repression requires formation of a complex with a corepressor protein of the Groucho/TLE family.

The protein resides in the nucleus. Its function is as follows. Transcriptional repressor of genes that require a bHLH protein for their transcription. This is Transcription factor HES-2 (Hes2) from Rattus norvegicus (Rat).